Here is a 714-residue protein sequence, read N- to C-terminus: Inducible lysine decarboxylase (714 aa).

Lys-367 is modified (N6-(pyridoxal phosphate)lysine).

Belongs to the Orn/Lys/Arg decarboxylase class-I family. In terms of assembly, homodecamer. Interacts with RavA. Pyridoxal 5'-phosphate is required as a cofactor.

Its subcellular location is the cytoplasm. It carries out the reaction L-lysine + H(+) = cadaverine + CO2. The polypeptide is Inducible lysine decarboxylase (cadA) (Salmonella typhi).